The following is a 175-amino-acid chain: Cytidylate kinase (175 aa).

7 to 15 is an ATP binding site; sequence GLPGSGTTT.

It belongs to the cytidylate kinase family. Type 2 subfamily.

It localises to the cytoplasm. It catalyses the reaction CMP + ATP = CDP + ADP. The catalysed reaction is dCMP + ATP = dCDP + ADP. This is Cytidylate kinase from Methanococcoides burtonii (strain DSM 6242 / NBRC 107633 / OCM 468 / ACE-M).